The sequence spans 262 residues: pFDCC methylesterase MES16 (262 aa).

Serine 87 acts as the Acyl-ester intermediate in catalysis. Catalysis depends on charge relay system residues aspartate 211 and histidine 239.

It belongs to the AB hydrolase superfamily. Methylesterase family.

The protein localises to the cytoplasm. The enzyme catalyses methyl (indol-3-yl)acetate + H2O = (indol-3-yl)acetate + methanol + H(+). It carries out the reaction methyl (-)-jasmonate + H2O = jasmonate + methanol + H(+). The catalysed reaction is primary fluorescent dioxobilin-type chlorophyll catabolite + H2O = O13(4)-desmethyl pFDCC + methanol + H(+). Its pathway is plant hormone biosynthesis. The protein operates within lipid metabolism; oxylipin biosynthesis. It functions in the pathway porphyrin-containing compound metabolism; chlorophyll degradation. In terms of biological role, involved in the chlorophyll breakdown by its action in fluorescent chlorophyll catabolites (FCCs) demethylation. Demethylates the C13(2)-carboxymethyl group present at the isocyclic ring of chlorophyll. Uses primary fluorescent dioxobilin-type chlorophyll catabolite (pFDCC) as substrate to produce O13(4)-desmethyl pFDCC. Also able to catalyze pheophorbides in vitro. Methylesterase shown to have carboxylesterase activity, methyl indole-3-acetic acid (MeIAA) esterase activity and methyl jasmonate (MeJA) esterase activity in vitro. The protein is pFDCC methylesterase MES16 of Arabidopsis thaliana (Mouse-ear cress).